The sequence spans 376 residues: Eugenol O-methyltransferase (376 aa).

G219, D242, M263, and K276 together coordinate S-adenosyl-L-methionine. Residue H280 is the Proton acceptor of the active site.

This sequence belongs to the class I-like SAM-binding methyltransferase superfamily. Cation-independent O-methyltransferase family. COMT subfamily. Homodimer. In terms of tissue distribution, expressed predominantly in root hairs.

It carries out the reaction (E)-isoeugenol + S-adenosyl-L-methionine = (E)-isomethyleugenol + S-adenosyl-L-homocysteine + H(+). Functionally, O-methyltransferase. Substrate preference is eugenol &gt;&gt; orcinol monomethyl ether &gt; resorcinol monomethyl ether. This Sorghum bicolor (Sorghum) protein is Eugenol O-methyltransferase (EOMT).